Consider the following 262-residue polypeptide: uncharacterized protein (262 aa).

The 219-residue stretch at 5–223 (IKVENLTKYF…MAYIEYLDNG (219 aa)) folds into the ABC transporter domain. ATP is bound at residue 37-44 (GHNGAGKT).

Belongs to the ABC transporter superfamily.

This is an uncharacterized protein from Methanocaldococcus jannaschii (strain ATCC 43067 / DSM 2661 / JAL-1 / JCM 10045 / NBRC 100440) (Methanococcus jannaschii).